The primary structure comprises 309 residues: Putative pyridoxal kinase C6F6.11c (309 aa).

The substrate site is built by Ser-12 and Tyr-123. ATP contacts are provided by residues Ser-182 to Ser-183 and Leu-209 to Gly-221. Asp-222 provides a ligand contact to substrate.

Belongs to the pyridoxine kinase family. The cofactor is a divalent metal cation.

It is found in the cytoplasm. It localises to the nucleus. It catalyses the reaction pyridoxal + ATP = pyridoxal 5'-phosphate + ADP + H(+). In terms of biological role, required for synthesis of pyridoxal-5-phosphate from vitamin B6. This is Putative pyridoxal kinase C6F6.11c from Schizosaccharomyces pombe (strain 972 / ATCC 24843) (Fission yeast).